Reading from the N-terminus, the 333-residue chain is Adenosine deaminase (333 aa).

Zn(2+)-binding residues include histidine 12 and histidine 14. The substrate site is built by histidine 14, aspartate 16, and glycine 170. Histidine 197 contacts Zn(2+). Catalysis depends on glutamate 200, which acts as the Proton donor. Zn(2+) is bound at residue aspartate 278. Aspartate 279 lines the substrate pocket.

The protein belongs to the metallo-dependent hydrolases superfamily. Adenosine and AMP deaminases family. Adenosine deaminase subfamily. It depends on Zn(2+) as a cofactor.

It catalyses the reaction adenosine + H2O + H(+) = inosine + NH4(+). The catalysed reaction is 2'-deoxyadenosine + H2O + H(+) = 2'-deoxyinosine + NH4(+). Its function is as follows. Catalyzes the hydrolytic deamination of adenosine and 2-deoxyadenosine. This chain is Adenosine deaminase, found in Salmonella typhi.